The sequence spans 540 residues: Putative laccase-11 (540 aa).

Plastocyanin-like domains follow at residues 1-114, 124-279, and 389-523; these read MATV…PPRG, REVP…YYGA, and NFPA…NDGP. Cu cation contacts are provided by H48, H50, H93, and H95. 7 residues coordinate Cu cation: H440, H443, H445, H502, C503, H504, and H508.

It belongs to the multicopper oxidase family. Cu cation serves as cofactor.

The protein localises to the secreted. Its subcellular location is the extracellular space. It is found in the apoplast. The enzyme catalyses 4 hydroquinone + O2 = 4 benzosemiquinone + 2 H2O. Its function is as follows. Lignin degradation and detoxification of lignin-derived products. This is Putative laccase-11 (LAC11) from Oryza sativa subsp. japonica (Rice).